The following is a 902-amino-acid chain: Protein translocase subunit SecA (902 aa).

ATP is bound by residues Gln85, 103–107, and Asp492; that span reads GEGKT. The interval 846 to 902 is disordered; the sequence is LSYSGGGEEPNQRPKSPRRRSERKIGPNEPCPCGSGKKFKKCHGRVGAPPLPTSQSQ. Cys876, Cys878, Cys887, and His888 together coordinate Zn(2+).

This sequence belongs to the SecA family. Monomer and homodimer. Part of the essential Sec protein translocation apparatus which comprises SecA, SecYEG and auxiliary proteins SecDF. Other proteins may also be involved. Zn(2+) serves as cofactor.

It localises to the cell membrane. The protein localises to the cytoplasm. The catalysed reaction is ATP + H2O + cellular proteinSide 1 = ADP + phosphate + cellular proteinSide 2.. Its function is as follows. Part of the Sec protein translocase complex. Interacts with the SecYEG preprotein conducting channel. Has a central role in coupling the hydrolysis of ATP to the transfer of proteins into and across the cell membrane, serving as an ATP-driven molecular motor driving the stepwise translocation of polypeptide chains across the membrane. In Rubrobacter xylanophilus (strain DSM 9941 / JCM 11954 / NBRC 16129 / PRD-1), this protein is Protein translocase subunit SecA.